Reading from the N-terminus, the 366-residue chain is tRNA (guanine(26)-N(2))-dimethyltransferase (366 aa).

A disordered region spans residues methionine 1–phenylalanine 28. Residues methionine 1 to valine 365 enclose the Trm1 methyltransferase domain. S-adenosyl-L-methionine is bound by residues arginine 37, arginine 64, and aspartate 79. Residues cysteine 234, cysteine 237, cysteine 254, and cysteine 257 each contribute to the Zn(2+) site.

The protein belongs to the class I-like SAM-binding methyltransferase superfamily. Trm1 family.

The enzyme catalyses guanosine(26) in tRNA + 2 S-adenosyl-L-methionine = N(2)-dimethylguanosine(26) in tRNA + 2 S-adenosyl-L-homocysteine + 2 H(+). Functionally, dimethylates a single guanine residue at position 26 of a number of tRNAs using S-adenosyl-L-methionine as donor of the methyl groups. The chain is tRNA (guanine(26)-N(2))-dimethyltransferase from Natronomonas pharaonis (strain ATCC 35678 / DSM 2160 / CIP 103997 / JCM 8858 / NBRC 14720 / NCIMB 2260 / Gabara) (Halobacterium pharaonis).